Consider the following 267-residue polypeptide: MKKTKTILDILKMKSDGEKITVLTCYDYATAGIMDGCGIDMILVGDSAGVVCAGYDNTLPVTMEEMIYHTKAVMRANPKALVVSDMPFLSYQIDLATARLNAGRLIKEAGAAAVKLEGGLNVVATIEAIVAMDVPVMGHIGLTPQSLHRMGGYRVQGRKDEQAEKLLADARAVEAAGAFAVVLEGIPMRLAERITRELTIPTIGIGAGPSCDGQVLVIHDILGLCEKYSPKFVKQYVDLKPIMAEAINSYIAEVKGGAFPTEGHSFH.

The Mg(2+) site is built by Asp-46 and Asp-85. Residues 46–47 (DS), Asp-85, and Lys-115 contribute to the 3-methyl-2-oxobutanoate site. Residue Glu-117 participates in Mg(2+) binding. Glu-184 serves as the catalytic Proton acceptor.

Belongs to the PanB family. As to quaternary structure, homodecamer; pentamer of dimers. Mg(2+) is required as a cofactor.

It localises to the cytoplasm. It catalyses the reaction 3-methyl-2-oxobutanoate + (6R)-5,10-methylene-5,6,7,8-tetrahydrofolate + H2O = 2-dehydropantoate + (6S)-5,6,7,8-tetrahydrofolate. Its pathway is cofactor biosynthesis; (R)-pantothenate biosynthesis; (R)-pantoate from 3-methyl-2-oxobutanoate: step 1/2. Functionally, catalyzes the reversible reaction in which hydroxymethyl group from 5,10-methylenetetrahydrofolate is transferred onto alpha-ketoisovalerate to form ketopantoate. In Geotalea uraniireducens (strain Rf4) (Geobacter uraniireducens), this protein is 3-methyl-2-oxobutanoate hydroxymethyltransferase.